Consider the following 450-residue polypeptide: Phosphoglucosamine mutase (450 aa).

The Phosphoserine intermediate role is filled by Ser-103. Residues Ser-103, Asp-243, Asp-245, and Asp-247 each contribute to the Mg(2+) site. The residue at position 103 (Ser-103) is a Phosphoserine.

It belongs to the phosphohexose mutase family. Mg(2+) serves as cofactor. In terms of processing, activated by phosphorylation.

The catalysed reaction is alpha-D-glucosamine 1-phosphate = D-glucosamine 6-phosphate. Its function is as follows. Catalyzes the conversion of glucosamine-6-phosphate to glucosamine-1-phosphate. The polypeptide is Phosphoglucosamine mutase (Lactobacillus helveticus (strain DPC 4571)).